Here is a 494-residue protein sequence, read N- to C-terminus: DNA-directed DNA/RNA polymerase mu (494 aa).

The tract at residues 1–24 (MLPKRRRARVGSPSGDAASSTPPS) is disordered. Ser12 is subject to Phosphoserine. The 101-residue stretch at 22-122 (PPSTRFPGVA…QPVPVECRHR (101 aa)) folds into the BRCT domain. The tract at residues 323–332 (RGKLQGHDVD) is involved in ssDNA binding. Residues Asp330, Asp332, and Asp418 each coordinate Mg(2+).

The protein belongs to the DNA polymerase type-X family. Mg(2+) serves as cofactor. In terms of tissue distribution, expressed in a number of tissues. Abundant in thymus.

It localises to the nucleus. The catalysed reaction is DNA(n) + a 2'-deoxyribonucleoside 5'-triphosphate = DNA(n+1) + diphosphate. Functionally, gap-filling polymerase involved in repair of DNA double-strand breaks by non-homologous end joining (NHEJ). Participates in immunoglobulin (Ig) light chain gene rearrangement in V(D)J recombination. The protein is DNA-directed DNA/RNA polymerase mu (POLM) of Homo sapiens (Human).